Here is a 365-residue protein sequence, read N- to C-terminus: tRNA/tmRNA (uracil-C(5))-methyltransferase (365 aa).

Glutamine 189, tyrosine 217, asparagine 222, glutamate 238, and aspartate 298 together coordinate S-adenosyl-L-methionine. Cysteine 323 (nucleophile) is an active-site residue. Catalysis depends on glutamate 357, which acts as the Proton acceptor.

It belongs to the class I-like SAM-binding methyltransferase superfamily. RNA M5U methyltransferase family. TrmA subfamily.

The enzyme catalyses uridine(54) in tRNA + S-adenosyl-L-methionine = 5-methyluridine(54) in tRNA + S-adenosyl-L-homocysteine + H(+). It carries out the reaction uridine(341) in tmRNA + S-adenosyl-L-methionine = 5-methyluridine(341) in tmRNA + S-adenosyl-L-homocysteine + H(+). Functionally, dual-specificity methyltransferase that catalyzes the formation of 5-methyluridine at position 54 (m5U54) in all tRNAs, and that of position 341 (m5U341) in tmRNA (transfer-mRNA). The sequence is that of tRNA/tmRNA (uracil-C(5))-methyltransferase from Shewanella woodyi (strain ATCC 51908 / MS32).